Reading from the N-terminus, the 115-residue chain is NADH-ubiquinone oxidoreductase chain 3 (115 aa).

The next 3 membrane-spanning stretches (helical) occupy residues 3 to 23 (LIMV…VAFW), 55 to 75 (FFLV…LLPI), and 84 to 104 (INTM…GLAY).

The protein belongs to the complex I subunit 3 family. As to quaternary structure, core subunit of respiratory chain NADH dehydrogenase (Complex I) which is composed of 45 different subunits. Interacts with TMEM186. Interacts with TMEM242.

It is found in the mitochondrion inner membrane. It carries out the reaction a ubiquinone + NADH + 5 H(+)(in) = a ubiquinol + NAD(+) + 4 H(+)(out). Functionally, core subunit of the mitochondrial membrane respiratory chain NADH dehydrogenase (Complex I) which catalyzes electron transfer from NADH through the respiratory chain, using ubiquinone as an electron acceptor. Essential for the catalytic activity of complex I. This Scotinomys teguina (Alston's brown mouse) protein is NADH-ubiquinone oxidoreductase chain 3.